A 352-amino-acid polypeptide reads, in one-letter code: Isoflavone-7-O-methyltransferase 6 (352 aa).

118-127 (VLDPTLSGSY) is a substrate binding site. S-adenosyl-L-methionine-binding residues include glycine 196, aspartate 219, aspartate 239, methionine 240, and lysine 253. Histidine 257 serves as the catalytic Proton acceptor.

This sequence belongs to the class I-like SAM-binding methyltransferase superfamily. Cation-independent O-methyltransferase family. COMT subfamily. Homodimer.

The catalysed reaction is a 7-hydroxyisoflavone + S-adenosyl-L-methionine = a 7-methoxyisoflavone + S-adenosyl-L-homocysteine + H(+). Its pathway is phytoalexin biosynthesis; medicarpin biosynthesis. Functionally, transfers a methyl group to 7-hydroxyls of the isoflavones daidzein, genistein and 6,7,4'-trihydroxyisoflavone. Can also methylate (+)6a-hydroxymaackiain with lower efficiency. This chain is Isoflavone-7-O-methyltransferase 6, found in Medicago sativa (Alfalfa).